The sequence spans 303 residues: MKKIKCALIGPGNIGTDLLAKLKRSSVLEPVWMVGIDPESEGLKRARELGVKTTAEGVDGLLPHVLADGVQIAFDATSAYVHAENARKLNALGVMMIDLTPAAIGPYCVPPVNLKEHLGKREMNVNMVTCGGQATIPMVAAVSRVQPVAYAEIVATVSSRSVGPGTRKNIDEFTRTTAGAVEKVGGARKGKAIIIINPAEPPLMMRDTIHCLTETEPDQQRITESIHAMIEEVQKYVPGYRLVNGPVFDGKRVTVFMEVAGLGDYLPTYAGNLDIMTAAAARTAEMFAEEMIAGNLTLEPVVA.

Cys-130 serves as the catalytic Acyl-thioester intermediate. NAD(+) is bound by residues 161 to 169 (SVGPGTRKN) and Asn-272.

It belongs to the acetaldehyde dehydrogenase family.

It carries out the reaction acetaldehyde + NAD(+) + CoA = acetyl-CoA + NADH + H(+). The protein is Acetaldehyde dehydrogenase 2 of Burkholderia vietnamiensis (strain G4 / LMG 22486) (Burkholderia cepacia (strain R1808)).